A 204-amino-acid chain; its full sequence is Large ribosomal subunit protein eL15 (204 aa).

The protein belongs to the eukaryotic ribosomal protein eL15 family. In terms of assembly, component of the large ribosomal subunit.

Its subcellular location is the cytoplasm. Functionally, component of the large ribosomal subunit. The ribosome is a large ribonucleoprotein complex responsible for the synthesis of proteins in the cell. This is Large ribosomal subunit protein eL15 (rpl15) from Tachysurus fulvidraco (Yellow catfish).